A 414-amino-acid chain; its full sequence is MDEILLQDPEIAKAIALESQRQMGKLELIASENIVSTAVREAQGSVLTNKYAEGYPGKRYYGGCEYVDMVETLAQERAKLLFDAQYVNVQPHSGSQANMAAYLAVLKPGDTILGMDLSHGGHLTHGSPVNFSGRLFKIISYGVQRETGRIDYDDVAAKAREHKPSVIVAGASAYPRAIDFARFRAIADEVGAKLVVDMAHIAGLVAAGLHQSPVPHAHITTTTTHKTLRGPRGGMILSTEDMGKTLNSQIFPGIQGGPLMHVIAAKAVALGEALHPAFKVYQQQVLDNAATLAACLTEAGYDLVSGGTDNHLMLVDLTSRDITGKDAEIALDTAGITVNKNTVPFETRSPFVTSGIRLGTAALTTRGMKQEHMRTVGQFIIAALEKRNDTAELEKIRKNVEEFAHQFPLFAHLA.

Residues Leu-117 and 121 to 123 (GHL) each bind (6S)-5,6,7,8-tetrahydrofolate. Lys-226 is modified (N6-(pyridoxal phosphate)lysine). Residue 349-351 (SPF) participates in (6S)-5,6,7,8-tetrahydrofolate binding.

Belongs to the SHMT family. In terms of assembly, homodimer. The cofactor is pyridoxal 5'-phosphate.

It localises to the cytoplasm. It carries out the reaction (6R)-5,10-methylene-5,6,7,8-tetrahydrofolate + glycine + H2O = (6S)-5,6,7,8-tetrahydrofolate + L-serine. The protein operates within one-carbon metabolism; tetrahydrofolate interconversion. It participates in amino-acid biosynthesis; glycine biosynthesis; glycine from L-serine: step 1/1. Its function is as follows. Catalyzes the reversible interconversion of serine and glycine with tetrahydrofolate (THF) serving as the one-carbon carrier. This reaction serves as the major source of one-carbon groups required for the biosynthesis of purines, thymidylate, methionine, and other important biomolecules. Also exhibits THF-independent aldolase activity toward beta-hydroxyamino acids, producing glycine and aldehydes, via a retro-aldol mechanism. This Desulfovibrio desulfuricans (strain ATCC 27774 / DSM 6949 / MB) protein is Serine hydroxymethyltransferase.